Here is a 215-residue protein sequence, read N- to C-terminus: Probable nicotinate-nucleotide adenylyltransferase (215 aa).

The protein belongs to the NadD family.

It carries out the reaction nicotinate beta-D-ribonucleotide + ATP + H(+) = deamido-NAD(+) + diphosphate. The protein operates within cofactor biosynthesis; NAD(+) biosynthesis; deamido-NAD(+) from nicotinate D-ribonucleotide: step 1/1. Catalyzes the reversible adenylation of nicotinate mononucleotide (NaMN) to nicotinic acid adenine dinucleotide (NaAD). The chain is Probable nicotinate-nucleotide adenylyltransferase from Shewanella putrefaciens (strain CN-32 / ATCC BAA-453).